Consider the following 403-residue polypeptide: Cytoplasmic tRNA 2-thiolation protein 2 (403 aa).

Belongs to the CTU2/NCS2 family.

The protein localises to the cytoplasm. It participates in tRNA modification; 5-methoxycarbonylmethyl-2-thiouridine-tRNA biosynthesis. Its function is as follows. Plays a central role in 2-thiolation of mcm(5)S(2)U at tRNA wobble positions of tRNA(Lys), tRNA(Glu) and tRNA(Gln). May act by forming a heterodimer with NCS6/CTU1 that ligates sulfur from thiocarboxylated URM1 onto the uridine of tRNAs at wobble position. The protein is Cytoplasmic tRNA 2-thiolation protein 2 of Drosophila ananassae (Fruit fly).